Reading from the N-terminus, the 188-residue chain is dCTP deaminase (188 aa).

DCTP contacts are provided by residues 111 to 116, 135 to 137, Gln156, Tyr170, Lys179, and Gln180; these read KSTYAR and TLE. Residue Glu137 is the Proton donor/acceptor of the active site.

Belongs to the dCTP deaminase family. In terms of assembly, homotrimer.

It carries out the reaction dCTP + H2O + H(+) = dUTP + NH4(+). Its pathway is pyrimidine metabolism; dUMP biosynthesis; dUMP from dCTP (dUTP route): step 1/2. Its function is as follows. Catalyzes the deamination of dCTP to dUTP. The chain is dCTP deaminase from Rickettsia canadensis (strain McKiel).